The sequence spans 424 residues: Adenylosuccinate synthetase 1 (424 aa).

Residues 12-18 (GDEGKGK) and 40-42 (GHT) contribute to the GTP site. D13 functions as the Proton acceptor in the catalytic mechanism. 2 residues coordinate Mg(2+): D13 and G40. IMP-binding positions include 13–16 (DEGK), 38–41 (NAGH), T127, R141, T236, and R304. The active-site Proton donor is H41. Position 300–306 (300–306 (ARTGRPR)) interacts with substrate. Residues R306, 332–334 (KLD), and 413–415 (GVG) each bind GTP.

This sequence belongs to the adenylosuccinate synthetase family. In terms of assembly, homodimer. It depends on Mg(2+) as a cofactor.

It is found in the cytoplasm. It carries out the reaction IMP + L-aspartate + GTP = N(6)-(1,2-dicarboxyethyl)-AMP + GDP + phosphate + 2 H(+). The protein operates within purine metabolism; AMP biosynthesis via de novo pathway; AMP from IMP: step 1/2. Its function is as follows. Plays an important role in the de novo pathway of purine nucleotide biosynthesis. Catalyzes the first committed step in the biosynthesis of AMP from IMP. The sequence is that of Adenylosuccinate synthetase 1 from Methanosarcina acetivorans (strain ATCC 35395 / DSM 2834 / JCM 12185 / C2A).